The primary structure comprises 262 residues: Acyl-[acyl-carrier-protein]--UDP-N-acetylglucosamine O-acyltransferase (262 aa).

This sequence belongs to the transferase hexapeptide repeat family. LpxA subfamily. Homotrimer.

It is found in the cytoplasm. It carries out the reaction a (3R)-hydroxyacyl-[ACP] + UDP-N-acetyl-alpha-D-glucosamine = a UDP-3-O-[(3R)-3-hydroxyacyl]-N-acetyl-alpha-D-glucosamine + holo-[ACP]. It functions in the pathway glycolipid biosynthesis; lipid IV(A) biosynthesis; lipid IV(A) from (3R)-3-hydroxytetradecanoyl-[acyl-carrier-protein] and UDP-N-acetyl-alpha-D-glucosamine: step 1/6. In terms of biological role, involved in the biosynthesis of lipid A, a phosphorylated glycolipid that anchors the lipopolysaccharide to the outer membrane of the cell. The protein is Acyl-[acyl-carrier-protein]--UDP-N-acetylglucosamine O-acyltransferase of Vibrio parahaemolyticus serotype O3:K6 (strain RIMD 2210633).